A 517-amino-acid chain; its full sequence is Bifunctional purine biosynthesis protein PurH (517 aa).

The MGS-like domain maps to M1–T146.

This sequence belongs to the PurH family.

The enzyme catalyses (6R)-10-formyltetrahydrofolate + 5-amino-1-(5-phospho-beta-D-ribosyl)imidazole-4-carboxamide = 5-formamido-1-(5-phospho-D-ribosyl)imidazole-4-carboxamide + (6S)-5,6,7,8-tetrahydrofolate. It catalyses the reaction IMP + H2O = 5-formamido-1-(5-phospho-D-ribosyl)imidazole-4-carboxamide. It participates in purine metabolism; IMP biosynthesis via de novo pathway; 5-formamido-1-(5-phospho-D-ribosyl)imidazole-4-carboxamide from 5-amino-1-(5-phospho-D-ribosyl)imidazole-4-carboxamide (10-formyl THF route): step 1/1. The protein operates within purine metabolism; IMP biosynthesis via de novo pathway; IMP from 5-formamido-1-(5-phospho-D-ribosyl)imidazole-4-carboxamide: step 1/1. The protein is Bifunctional purine biosynthesis protein PurH of Prochlorococcus marinus (strain MIT 9313).